The chain runs to 101 residues: Isochorismate pyruvate lyase (101 aa).

The 91-residue stretch at 4-94 folds into the Chorismate mutase domain; sequence PEDCTGLADI…WYIAEQIKYW (91 aa). 4 residues coordinate substrate: R14, R31, K42, and Q90.

Dimer of dimers.

The catalysed reaction is isochorismate = salicylate + pyruvate. It carries out the reaction chorismate = prephenate. It participates in siderophore biosynthesis; salicylate biosynthesis. With respect to regulation, inhibited by endo-oxabicyclic diacid resembling to the conformation of the transition state. Involved in the incorporation of salicylate into the siderophore pyochelin. Catalyzes the elimination of the enolpyruvyl side chain from isochorismate to yield salicylate and pyruvate via a rare pericyclic hydrogen transfer mechanism from C2 to C5. PchB also catalyzes the nonphysiological Claisen rearrangement of chorismate to prephenate in which the pyruvylenol tail is transferred from a C3 ether linkage to a C1-C9 linkage. This chain is Isochorismate pyruvate lyase, found in Pseudomonas aeruginosa (strain ATCC 15692 / DSM 22644 / CIP 104116 / JCM 14847 / LMG 12228 / 1C / PRS 101 / PAO1).